The following is a 112-amino-acid chain: Putative RNase TTE0752 (112 aa).

Catalysis depends on residues Arg-74 and His-79. An RX(4)HXY motif motif is present at residues 74–81 (RDKLIHEY). At Tyr-81 the chain carries O-di-AMP-tyrosine.

It belongs to the HepT RNase toxin family. In terms of assembly, homodimer, probably forms a complex with cognate antitoxin TTE0751. Post-translationally, modified by cognate antitoxin TTE0751; probably at least 2 successive AMPylation events occur on Tyr-81.

In terms of biological role, probable toxic component of a putative type VII toxin-antitoxin (TA) system, probably an RNase. Probably neutralized by cognate antitoxin TTE0751. Neutralization may be due to AMPylation by TTE0751. This is Putative RNase TTE0752 from Caldanaerobacter subterraneus subsp. tengcongensis (strain DSM 15242 / JCM 11007 / NBRC 100824 / MB4) (Thermoanaerobacter tengcongensis).